We begin with the raw amino-acid sequence, 62 residues long: Chromatin protein Cren7 2 (62 aa).

Belongs to the Cren7 family. In terms of assembly, monomer. In terms of processing, methylated at multiple sites, to varying extents.

It is found in the chromosome. The protein resides in the cytoplasm. Its function is as follows. A chromatin protein, binds double-stranded DNA without sequence specificity. Constrains negative DNA supercoils. In Hyperthermus butylicus (strain DSM 5456 / JCM 9403 / PLM1-5), this protein is Chromatin protein Cren7 2 (cren7-2).